The following is a 386-amino-acid chain: S-adenosylmethionine synthase (386 aa).

His-16 provides a ligand contact to ATP. Asp-18 lines the Mg(2+) pocket. Glu-44 provides a ligand contact to K(+). 2 residues coordinate L-methionine: Glu-57 and Gln-100. A flexible loop region spans residues Gln-100 to Arg-110. ATP is bound by residues Asp-165–Lys-167, Asp-240, Arg-246–Lys-247, Ala-263, and Lys-267. Asp-240 contacts L-methionine. Lys-271 serves as a coordination point for L-methionine.

The protein belongs to the AdoMet synthase family. Homotetramer; dimer of dimers. Mg(2+) serves as cofactor. It depends on K(+) as a cofactor.

It is found in the cytoplasm. The catalysed reaction is L-methionine + ATP + H2O = S-adenosyl-L-methionine + phosphate + diphosphate. The protein operates within amino-acid biosynthesis; S-adenosyl-L-methionine biosynthesis; S-adenosyl-L-methionine from L-methionine: step 1/1. Catalyzes the formation of S-adenosylmethionine (AdoMet) from methionine and ATP. The overall synthetic reaction is composed of two sequential steps, AdoMet formation and the subsequent tripolyphosphate hydrolysis which occurs prior to release of AdoMet from the enzyme. In Francisella tularensis subsp. tularensis (strain WY96-3418), this protein is S-adenosylmethionine synthase.